Consider the following 125-residue polypeptide: Large ribosomal subunit protein bL17 (125 aa).

Belongs to the bacterial ribosomal protein bL17 family. As to quaternary structure, part of the 50S ribosomal subunit. Contacts protein L32.

This is Large ribosomal subunit protein bL17 from Syntrophus aciditrophicus (strain SB).